We begin with the raw amino-acid sequence, 409 residues long: L-cysteine:1D-myo-inositol 2-amino-2-deoxy-alpha-D-glucopyranoside ligase (409 aa).

Cysteine 43 contributes to the Zn(2+) binding site. L-cysteinyl-5'-AMP-binding positions include 43–46 (CGIT), threonine 58, and 81–83 (NVT). Residues 45–55 (ITPYDATHMGH) carry the 'HIGH' region motif. Residues 183-188 (ERGGDP) carry the 'ERGGDP' region motif. Residue tryptophan 224 participates in L-cysteinyl-5'-AMP binding. Cysteine 228 is a binding site for Zn(2+). 246-248 (GSD) contributes to the L-cysteinyl-5'-AMP binding site. Histidine 253 provides a ligand contact to Zn(2+). L-cysteinyl-5'-AMP is bound at residue valine 280. The short motif at 286 to 290 (KMSKS) is the 'KMSKS' region element.

Belongs to the class-I aminoacyl-tRNA synthetase family. MshC subfamily. Monomer. Requires Zn(2+) as cofactor.

It carries out the reaction 1D-myo-inositol 2-amino-2-deoxy-alpha-D-glucopyranoside + L-cysteine + ATP = 1D-myo-inositol 2-(L-cysteinylamino)-2-deoxy-alpha-D-glucopyranoside + AMP + diphosphate + H(+). Its function is as follows. Catalyzes the ATP-dependent condensation of GlcN-Ins and L-cysteine to form L-Cys-GlcN-Ins. This chain is L-cysteine:1D-myo-inositol 2-amino-2-deoxy-alpha-D-glucopyranoside ligase, found in Streptomyces scabiei (strain 87.22).